A 73-amino-acid polypeptide reads, in one-letter code: Large ribosomal subunit protein bL31 (73 aa).

It belongs to the bacterial ribosomal protein bL31 family. Type A subfamily. As to quaternary structure, part of the 50S ribosomal subunit.

Binds the 23S rRNA. The polypeptide is Large ribosomal subunit protein bL31 (Bartonella henselae (strain ATCC 49882 / DSM 28221 / CCUG 30454 / Houston 1) (Rochalimaea henselae)).